The primary structure comprises 275 residues: Aldo-keto reductase MSMEG_2408/MSMEI_2347 (275 aa).

Residue Tyr-49 is the Proton donor of the active site. Residues Leu-189, Ile-227, Lys-229, Ser-230, Val-231, Arg-235, Ser-238, and Asn-239 each contribute to the NADPH site. An Isoglutamyl lysine isopeptide (Lys-Gln) (interchain with Q-Cter in protein Pup) cross-link involves residue Lys-262.

Belongs to the aldo/keto reductase family.

The sequence is that of Aldo-keto reductase MSMEG_2408/MSMEI_2347 from Mycolicibacterium smegmatis (strain ATCC 700084 / mc(2)155) (Mycobacterium smegmatis).